The primary structure comprises 294 residues: Metallophosphoesterase MPPED2 (294 aa).

The Mn(2+) site is built by aspartate 65, histidine 67, aspartate 86, asparagine 117, and histidine 213. Position 117-118 (117-118 (NH)) interacts with GMP. Residues 225–226 (KE) and 252–255 (GIHE) each bind GMP. Position 254 (histidine 254) interacts with Mn(2+).

Belongs to the UPF0046 family. In terms of assembly, homodimer. It depends on Mn(2+) as a cofactor. Requires Co(2+) as cofactor.

Its activity is regulated as follows. Inhibited by nmolar levels of AMP and GMP. Functionally, displays low metallophosphoesterase activity (in vitro). May play a role in the development of the nervous system. The polypeptide is Metallophosphoesterase MPPED2 (Mpped2) (Mus musculus (Mouse)).